A 346-amino-acid polypeptide reads, in one-letter code: Peroxidase 37 (346 aa).

The signal sequence occupies residues 1-22; it reads MHSSLIKLGFLLLLIQVSLSHA. Position 23 is a pyrrolidone carboxylic acid (Gln23). 4 cysteine pairs are disulfide-bonded: Cys33-Cys113, Cys66-Cys71, Cys119-Cys323, and Cys199-Cys231. The Proton acceptor role is filled by His64. The Ca(2+) site is built by Asp65, Val68, Gly70, Asp72, and Ser74. An N-linked (GlcNAc...) asparagine glycan is attached at Asn79. Pro161 contacts substrate. A heme b-binding site is contributed by His192. Ca(2+) is bound at residue Thr193. N-linked (GlcNAc...) asparagine glycosylation is found at Asn208 and Asn236. Ca(2+) is bound by residues Asp244, Thr247, and Asp252.

Belongs to the peroxidase family. Classical plant (class III) peroxidase subfamily. Heme b serves as cofactor. The cofactor is Ca(2+).

It localises to the secreted. It is found in the vacuole. It catalyses the reaction 2 a phenolic donor + H2O2 = 2 a phenolic radical donor + 2 H2O. Functionally, removal of H(2)O(2), oxidation of toxic reductants, biosynthesis and degradation of lignin, suberization, auxin catabolism, response to environmental stresses such as wounding, pathogen attack and oxidative stress. These functions might be dependent on each isozyme/isoform in each plant tissue. This is Peroxidase 37 (PER37) from Arabidopsis thaliana (Mouse-ear cress).